Reading from the N-terminus, the 176-residue chain is Ribosome maturation factor RimM (176 aa).

Residues 97 to 176 form the PRC barrel domain; the sequence is EDEFYWRDLI…QILVDWDPDF (80 aa).

Belongs to the RimM family. Binds ribosomal protein uS19.

Its subcellular location is the cytoplasm. Functionally, an accessory protein needed during the final step in the assembly of 30S ribosomal subunit, possibly for assembly of the head region. Essential for efficient processing of 16S rRNA. May be needed both before and after RbfA during the maturation of 16S rRNA. It has affinity for free ribosomal 30S subunits but not for 70S ribosomes. This Shewanella loihica (strain ATCC BAA-1088 / PV-4) protein is Ribosome maturation factor RimM.